Here is a 73-residue protein sequence, read N- to C-terminus: Conotoxin Im14.3 (73 aa).

Positions 1–17 are cleaved as a signal peptide; it reads MGVFRCCLAAALVVVCL. The propeptide occupies 18–35; it reads SRMGGTEPLESNHEDERR. Residues 22–42 are disordered; sequence GTEPLESNHEDERRADDTSGD. Over residues 27 to 38 the composition is skewed to basic and acidic residues; sequence ESNHEDERRADD. One can recognise a ShKT domain in the interval 44-73; it reads CVDTNEDCVNWASTGQCEANPSYMRENCRK.

In terms of processing, contain 2 disulfide bonds. In terms of tissue distribution, expressed by the venom duct.

It is found in the secreted. In terms of biological role, probable neurotoxin. This chain is Conotoxin Im14.3, found in Conus imperialis (Imperial cone).